The sequence spans 307 residues: Coproporphyrin III ferrochelatase (307 aa).

Fe-coproporphyrin III-binding positions include Tyr12, Arg29, 45–46 (RY), Ser53, and Tyr124. Residues His181 and Glu263 each coordinate Fe(2+).

It belongs to the ferrochelatase family.

Its subcellular location is the cytoplasm. The enzyme catalyses Fe-coproporphyrin III + 2 H(+) = coproporphyrin III + Fe(2+). It participates in porphyrin-containing compound metabolism; protoheme biosynthesis. Its function is as follows. Involved in coproporphyrin-dependent heme b biosynthesis. Catalyzes the insertion of ferrous iron into coproporphyrin III to form Fe-coproporphyrin III. This is Coproporphyrin III ferrochelatase from Staphylococcus saprophyticus subsp. saprophyticus (strain ATCC 15305 / DSM 20229 / NCIMB 8711 / NCTC 7292 / S-41).